The following is a 115-amino-acid chain: U3-lycotoxin-Ls1a (115 aa).

An N-terminal signal peptide occupies residues 1–20 (MKFVLLFGVLLVTLFSYSSA). A propeptide spanning residues 21-44 (EMLDDFDQADEEELLSLIEKEEAR) is cleaved from the precursor. Disulfide bonds link Cys48–Cys63, Cys55–Cys72, Cys62–Cys87, and Cys74–Cys85.

The protein belongs to the neurotoxin 19 (CSTX) family. 01 subfamily. As to expression, expressed by the venom gland.

It is found in the secreted. The sequence is that of U3-lycotoxin-Ls1a from Lycosa singoriensis (Wolf spider).